Consider the following 204-residue polypeptide: Probable GTP-binding protein EngB (204 aa).

Residues 1 to 21 form a disordered region; that stretch reads MKVSSAEFVTSGTRPAHYPPP. The region spanning 22-194 is the EngB-type G domain; that stretch reads ELPEVAFAGR…WARIEVMLAA (173 aa). GTP-binding positions include 30–37, 57–61, 75–78, 142–145, and 173–175; these read GRSNVGKS, GRTQL, DLPG, TKCD, and FSA. Residues Ser37 and Thr59 each coordinate Mg(2+).

It belongs to the TRAFAC class TrmE-Era-EngA-EngB-Septin-like GTPase superfamily. EngB GTPase family. Requires Mg(2+) as cofactor.

Its function is as follows. Necessary for normal cell division and for the maintenance of normal septation. The chain is Probable GTP-binding protein EngB from Geobacter metallireducens (strain ATCC 53774 / DSM 7210 / GS-15).